Consider the following 103-residue polypeptide: Large ribosomal subunit protein bL21 (103 aa).

The protein belongs to the bacterial ribosomal protein bL21 family. In terms of assembly, part of the 50S ribosomal subunit. Contacts protein L20.

Functionally, this protein binds to 23S rRNA in the presence of protein L20. The sequence is that of Large ribosomal subunit protein bL21 from Shewanella pealeana (strain ATCC 700345 / ANG-SQ1).